The chain runs to 328 residues: MIEKIWSGESPLWRLLLPLSWLYGLVSGAIRLCYKLKLKRAWRAPVPVVVVGNLTAGGNGKTPVVVWLVEQLQQRGIRVGVVSRGYGSKAESYPLLLSADTTTAQAGDEPVLIYQRTDAPVAVSPVRSDAVKAILAQHPDVQIIVTDDGLQHYRLARDVEIVVIDGVRRFGNGWWLPAGPMRERAGRLKSVDAVIVNGGVPRSGEIPMHLLPGQAVNLRTGTRCDVAQLEHVVAMAGIGHPPRFFATLKMCGVQPEKCVPLADHQSLNHADVSASVSAEQTLVMTEKDAVKCRAFAEENWWYLPVDAQLSGDEPAKLLTQLTSLASGN.

55–62 lines the ATP pocket; sequence TAGGNGKT.

This sequence belongs to the LpxK family.

It catalyses the reaction a lipid A disaccharide + ATP = a lipid IVA + ADP + H(+). The protein operates within glycolipid biosynthesis; lipid IV(A) biosynthesis; lipid IV(A) from (3R)-3-hydroxytetradecanoyl-[acyl-carrier-protein] and UDP-N-acetyl-alpha-D-glucosamine: step 6/6. Transfers the gamma-phosphate of ATP to the 4'-position of a tetraacyldisaccharide 1-phosphate intermediate (termed DS-1-P) to form tetraacyldisaccharide 1,4'-bis-phosphate (lipid IVA). This chain is Tetraacyldisaccharide 4'-kinase, found in Shigella boydii serotype 4 (strain Sb227).